Consider the following 106-residue polypeptide: Iron-sulfur cluster assembly protein CyaY (106 aa).

The protein belongs to the frataxin family. As to quaternary structure, interacts with IscS. Certain pairs of proteins can bind simultaneously to IscS; IscS-IscU-CyaY complexes can be isolated in vitro, but (IscS-TusA-CyaY) complexes cannot.

Functionally, involved in iron-sulfur (Fe-S) cluster assembly. May act as a regulator of Fe-S biogenesis. This chain is Iron-sulfur cluster assembly protein CyaY, found in Escherichia coli O157:H7.